The primary structure comprises 159 residues: Large ribosomal subunit protein uL10 (159 aa).

The protein belongs to the universal ribosomal protein uL10 family. As to quaternary structure, part of the ribosomal stalk of the 50S ribosomal subunit. The N-terminus interacts with L11 and the large rRNA to form the base of the stalk. The C-terminus forms an elongated spine to which L12 dimers bind in a sequential fashion forming a multimeric L10(L12)X complex.

Functionally, forms part of the ribosomal stalk, playing a central role in the interaction of the ribosome with GTP-bound translation factors. The chain is Large ribosomal subunit protein uL10 from Campylobacter jejuni (strain RM1221).